Reading from the N-terminus, the 111-residue chain is U-scoloptoxin(16)-Sm2a (111 aa).

A signal peptide spans 1-28 (MCAKPNHLFVTVTFIFGFAVCIVQISAW).

This sequence belongs to the scoloptoxin-16 family. In terms of processing, contains 4 disulfide bonds. In terms of tissue distribution, expressed by the venom gland.

It is found in the secreted. The chain is U-scoloptoxin(16)-Sm2a from Scolopendra morsitans (Tanzanian blue ringleg centipede).